The primary structure comprises 163 residues: Probable metallophosphoesterase MG207 (163 aa).

Mn(2+)-binding residues include Asp-9, His-11, Asp-34, Asn-53, His-75, His-107, and His-109.

This sequence belongs to the metallophosphoesterase superfamily. YfcE family. Mn(2+) is required as a cofactor.

The polypeptide is Probable metallophosphoesterase MG207 (Mycoplasma genitalium (strain ATCC 33530 / DSM 19775 / NCTC 10195 / G37) (Mycoplasmoides genitalium)).